The sequence spans 460 residues: Beta-1,3-xylanase TXYA (460 aa).

A signal peptide spans 1-22 (MKKLAKMISVATLGACAFQAHA). Residues 23–337 (LDGKLVPDQG…LSDPKFIRHS (315 aa)) form the GH26 domain. Catalysis depends on Glu138, which acts as the Proton donor. Glu234 (nucleophile) is an active-site residue. Residues 347-371 (GNSDGGNGGDNGGDNGGDNGGETPE) form a disordered region. Residues 348–366 (NSDGGNGGDNGGDNGGDNG) are compositionally biased toward gly residues. Residues 368-460 (ETPENCTDDF…TVTFTNQVCN (93 aa)) form a carbohydrate binding module (CBM) region. 2 cysteine pairs are disulfide-bonded: Cys373–Cys459 and Cys404–Cys409.

The protein belongs to the glycosyl hydrolase 26 family.

The enzyme catalyses Random hydrolysis of (1-&gt;3)-beta-D-glycosidic linkages in (1-&gt;3)-beta-D-xylans.. Completely inhibited by Cu(2+), Hg(2+) and N-bromosuccinimide. Strongly inhibited by Ag(+), Zn(2+) and Pb(2+). Moderately inhibited by Fe(3+), Al(3+), Mn(2+), dithiothreitol and p-chloromercuribenzoic acid. Slightly activated by Mg(2+) and Ca(2+). Unaffected by Na(+), K(+), Ba(2+), EDTA, iodoacetic acid and N-ethylmalaimide. Functionally, catalyzes the hydrolysis of beta-1,3-xylan into oligosaccharides, mainly xylotriose and xylobiose with smaller amounts of xylotetraose, xylose, xylopentaose and xylohexaose. Weakly active toward beta-1,3-xylotriose, yielding xylose and xylobiose. Converts beta-1,3-xylotetraose into xylotriose, xylobiose and xylose. Converts beta-1,3-xylopentaose into xylotetraose, xylotriose, xylobiose and xylose. Does not hydrolyze xylobiose, p-nitrophenyl-beta-xyloside, beta-1,4-xylan, curdlan or carboxymethylcellulose. This chain is Beta-1,3-xylanase TXYA, found in Vibrio sp.